We begin with the raw amino-acid sequence, 901 residues long: Probable inorganic carbon transporter subunit DabA (901 aa).

Zn(2+) contacts are provided by C424, D426, H606, and C621.

Belongs to the inorganic carbon transporter (TC 9.A.2) DabA family. In terms of assembly, forms a complex with DabB. It depends on Zn(2+) as a cofactor.

The protein localises to the cell membrane. Part of an energy-coupled inorganic carbon pump. In Staphylococcus aureus (strain USA300), this protein is Probable inorganic carbon transporter subunit DabA.